The sequence spans 179 residues: Large ribosomal subunit protein uL5 (179 aa).

The protein belongs to the universal ribosomal protein uL5 family. As to quaternary structure, part of the 50S ribosomal subunit; part of the 5S rRNA/L5/L18/L25 subcomplex. Contacts the 5S rRNA and the P site tRNA. Forms a bridge to the 30S subunit in the 70S ribosome.

Functionally, this is one of the proteins that bind and probably mediate the attachment of the 5S RNA into the large ribosomal subunit, where it forms part of the central protuberance. In the 70S ribosome it contacts protein S13 of the 30S subunit (bridge B1b), connecting the 2 subunits; this bridge is implicated in subunit movement. Contacts the P site tRNA; the 5S rRNA and some of its associated proteins might help stabilize positioning of ribosome-bound tRNAs. The sequence is that of Large ribosomal subunit protein uL5 from Neisseria gonorrhoeae (strain ATCC 700825 / FA 1090).